The primary structure comprises 178 residues: Alkyl hydroperoxide reductase AhpD (178 aa).

Cys-130 functions as the Proton donor in the catalytic mechanism. Cys-130 and Cys-133 are joined by a disulfide. Residue Cys-133 is the Cysteine sulfenic acid (-SOH) intermediate of the active site.

It belongs to the AhpD family. In terms of assembly, homotrimer.

It carries out the reaction N(6)-[(R)-dihydrolipoyl]-L-lysyl-[lipoyl-carrier protein] + a hydroperoxide = N(6)-[(R)-lipoyl]-L-lysyl-[lipoyl-carrier protein] + an alcohol + H2O. Functionally, antioxidant protein with alkyl hydroperoxidase activity. Required for the reduction of the AhpC active site cysteine residues and for the regeneration of the AhpC enzyme activity. In Mycobacterium marinum (strain ATCC BAA-535 / M), this protein is Alkyl hydroperoxide reductase AhpD.